We begin with the raw amino-acid sequence, 1155 residues long: RhoGEF domain-containing protein gxcJ (1155 aa).

Disordered regions lie at residues 114–216 (ENNS…NFLK), 259–333 (LNKK…IPSN), 429–460 (LVSQSPPPPQPPFLASASSSSTTTITTTDSLE), 484–508 (LNNESAASSSSLSTTTTTTTTTTTT), and 604–639 (SNSNSSNNNNSNSNNITNSNSSSFSKKNSNNNNNYQ). Low complexity-rich tracts occupy residues 115 to 153 (NNSINDNNNNNNNNNNNNNNNNNNNNNNNNNNNNNTNNN), 161 to 211 (TITN…NNNN), and 260 to 303 (NKKS…NNNN). A coiled-coil region spans residues 192 to 257 (NNNNNNNNNN…KDIEKLNSAL (66 aa)). Positions 304-319 (YKPTITSSQTQPSLME) are enriched in polar residues. Positions 320–330 (NSKDIDKKEKI) are enriched in basic and acidic residues. The span at 441–457 (FLASASSSSTTTITTTD) shows a compositional bias: low complexity. The span at 604–637 (SNSNSSNNNNSNSNNITNSNSSSFSKKNSNNNNN) shows a compositional bias: low complexity. The 175-residue stretch at 700-874 (HRTNLIKEIL…EKIVGTINSQ (175 aa)) folds into the DH domain. A disordered region spans residues 1084–1155 (SHRLSIPSTS…LVKSLVNIKT (72 aa)). Low complexity-rich tracts occupy residues 1093 to 1121 (SSPNNGASLNGNSSSNSSSTSISTVGSPN) and 1128 to 1137 (QQQQLQQQQQ).

GTPase-activating protein. The polypeptide is RhoGEF domain-containing protein gxcJ (gxcJ) (Dictyostelium discoideum (Social amoeba)).